The chain runs to 131 residues: uncharacterized protein (131 aa).

Helical transmembrane passes span 7–29 (LLKF…SLLY), 49–69 (LVKV…LIAL), 76–98 (LILI…LFTY), and 102–124 (ELSE…FLYL).

The protein resides in the cell membrane. This is an uncharacterized protein from Aquifex aeolicus (strain VF5).